The sequence spans 417 residues: Spermidine/putrescine import ATP-binding protein PotA (417 aa).

An ABC transporter domain is found at 5–308; sequence IILKDLTKVF…PANRFVAQFV (304 aa). An ATP-binding site is contributed by 37-44; it reads GPSGCGKT. An insert region spans residues 105–177; that stretch reads DFNSKIKANL…TALKCKKINK (73 aa).

The protein belongs to the ABC transporter superfamily. Spermidine/putrescine importer (TC 3.A.1.11.1) family. As to quaternary structure, the complex is composed of two ATP-binding proteins (PotA), two transmembrane proteins (PotB and PotC) and a solute-binding protein (PotD).

It localises to the cell membrane. It catalyses the reaction ATP + H2O + polyamine-[polyamine-binding protein]Side 1 = ADP + phosphate + polyamineSide 2 + [polyamine-binding protein]Side 1.. Functionally, part of the ABC transporter complex PotABCD involved in spermidine/putrescine import. Responsible for energy coupling to the transport system. The polypeptide is Spermidine/putrescine import ATP-binding protein PotA (Onion yellows phytoplasma (strain OY-M)).